The following is a 455-amino-acid chain: Vimentin (455 aa).

The head stretch occupies residues 1 to 87 (MASRTNTSSY…GLADAINTEF (87 aa)). Residues 87–122 (FKTNRTNEKAEMQHLNDRFASYIDKVRFLEQQNKIL) adopt a coiled-coil conformation. The segment at 88-122 (KTNRTNEKAEMQHLNDRFASYIDKVRFLEQQNKIL) is coil 1A. The IF rod domain occupies 94–402 (EKAEMQHLND…KLLEGEESRI (309 aa)). The interval 123-144 (IAELEQMRGKGSSRVGDLYQDE) is linker 1. Residues 145–236 (MRELRRQVDQ…KLHDEELAEL (92 aa)) are a coiled coil. The tract at residues 145–236 (MRELRRQVDQ…KLHDEELAEL (92 aa)) is coil 1B. Residues 237-259 (QIQIQEQHVQIDMEVAKPDLTAA) are linker 12. The tract at residues 260–398 (LKDVRQQYET…ATYRKLLEGE (139 aa)) is coil 2. A coiled-coil region spans residues 294-398 (ARNNEAIRLA…ATYRKLLEGE (105 aa)). Residues 399-455 (ESRITTPFPNLSSLTLRETMKETRPAMDSLSKKVVIKTIETRDGHIINESSQNDDLE) are tail.

Belongs to the intermediate filament family. Homomer assembled from elementary dimers. One of the most prominent phosphoproteins in various cells of mesenchymal origin. Phosphorylation is enhanced during cell division, at which time vimentin filaments are significantly reorganized.

It is found in the cytoplasm. Its subcellular location is the cytoskeleton. The protein localises to the nucleus matrix. In terms of biological role, vimentins are class-III intermediate filaments found in various non-epithelial cells, especially mesenchymal cells. Vimentin is attached to the nucleus, endoplasmic reticulum, and mitochondria, either laterally or terminally. This is Vimentin (vim) from Cyprinus carpio (Common carp).